A 186-amino-acid polypeptide reads, in one-letter code: Protein FAM9B (186 aa).

A disordered region spans residues 1–93 (MAAWGKKHAG…KHALRKKQLK (93 aa)). Composition is skewed to basic and acidic residues over residues 10–27 (GKDPVRDECEERNRFTET) and 34–58 (DEHGEREPFAETDEHTGANTKKPED). A compositionally biased stretch (basic residues) spans 66–93 (KRKRMKMDKTCSKTKNKSKHALRKKQLK).

Belongs to the XLR/SYCP3 family. Expressed in testis and ovary (at protein level).

It localises to the nucleus. It is found in the cytoplasm. Its subcellular location is the chromosome. Its function is as follows. May play a role in meiosis. This chain is Protein FAM9B, found in Homo sapiens (Human).